Reading from the N-terminus, the 2570-residue chain is Highly reducing polyketide synthase tstA (2570 aa).

The 428-residue stretch at 16 to 443 (AMPIAVVGIG…GANAHVVLEN (428 aa)) folds into the Ketosynthase family 3 (KS3) domain. Active-site for beta-ketoacyl synthase activity residues include cysteine 191, histidine 326, and histidine 366. A disordered region spans residues 458 to 478 (HTRKSATESSGTSTPSNPGPH). Residues 464 to 478 (TESSGTSTPSNPGPH) are compositionally biased toward low complexity. Residues 567 to 898 (FVFTGQGAQW…YSALVRNKNA (332 aa)) form the Malonyl-CoA:ACP transacylase (MAT) domain. Residues 965–1103 (TDLLGVLERN…GLVSVVAPQK (139 aa)) form an N-terminal hotdog fold region. In terms of domain architecture, PKS/mFAS DH spans 965-1293 (TDLLGVLERN…CATLAREGAD (329 aa)). The Proton acceptor; for dehydratase activity role is filled by histidine 997. Residues 1133-1293 (RRNINVPQFY…CATLAREGAD (161 aa)) are C-terminal hotdog fold. Catalysis depends on aspartate 1198, which acts as the Proton donor; for dehydratase activity. A methyltransferase (CMeT) domain region spans residues 1343–1645 (LERAAYYMLK…IATSINSNNY (303 aa)). In terms of domain architecture, Enoyl reductase (ER) spans 1866 to 2178 (GLLDSIFWTD…TGGHMGKLVG (313 aa)). The Ketoreductase (KR) domain occupies 2202–2379 (ASYVLIGGLG…ATTIDLGAIS (178 aa)). In terms of domain architecture, Carrier spans 2482–2559 (DASELILGAL…HLATKIAQRS (78 aa)). O-(pantetheine 4'-phosphoryl)serine is present on serine 2519.

The cofactor is pantetheine 4'-phosphate.

Its pathway is secondary metabolite biosynthesis. In terms of biological role, highly reducing polyketide synthase; part of the gene cluster that mediates the biosynthesis of the antihypercholesterolemic agents phomoidrides which are dimeric anhydrides. The pathway begins with the highly reducing polyketide synthase tstA that catalyzes the formation of a C12-fatty acyl-ACP, starting from one acetate and 5 malonate units. The hydrolase tstM is involved in the release of the C12-fatty acyl chain from tstA. The alkylcitrate synthase (ACS) tstJ and the alkylcitrate dehydratase (ACDH) tstI then give rise to decarboxylated monomeric anhydrides by coupling the C12-fatty acyl chain with oxalacetic acid. The cyclase tstC is responsible for the dimerization of the monomeric anhydrides which leads to the production of prephomoidride that contains the characteristic bicyclo[4.3.1]deca-1,6-diene system of phomoidrides. Iterative oxidation catalyzed by the alpha-ketoglutarate-dependent dioxygenase tstK produced then phomoidride A. Finally, the methyltransferase tstE converts phomoidride A to phomoidride B via an acetalization reaction. The phosphatidylethanolamine-binding protein tstB and tstN are not essential for dimerization and their functions have still to be determined. The protein is Highly reducing polyketide synthase tstA of Talaromyces stipitatus (strain ATCC 10500 / CBS 375.48 / QM 6759 / NRRL 1006) (Penicillium stipitatum).